The chain runs to 138 residues: Large ribosomal subunit protein uL16m (138 aa).

This sequence belongs to the universal ribosomal protein uL16 family.

It localises to the mitochondrion. In Chondrus crispus (Carrageen Irish moss), this protein is Large ribosomal subunit protein uL16m (RPL16).